A 269-amino-acid chain; its full sequence is Membrane protein insertase YidC 1 (269 aa).

The signal sequence occupies residues 1–20 (MKKKFSLIAMAGAALLLLTA). Residue cysteine 21 is the site of N-palmitoyl cysteine attachment. Cysteine 21 carries S-diacylglycerol cysteine lipidation. 4 helical membrane passes run 45–65 (IRFL…TIVI), 124–144 (YMGC…YQAL), 165–185 (PTFI…YLMM), and 203–223 (PIFI…YWVI).

The protein belongs to the OXA1/ALB3/YidC family. Type 2 subfamily.

The protein localises to the cell membrane. Its function is as follows. Required for the insertion and/or proper folding and/or complex formation of integral membrane proteins into the membrane. Involved in integration of membrane proteins that insert both dependently and independently of the Sec translocase complex, as well as at least some lipoproteins. This Lactococcus lactis subsp. lactis (strain IL1403) (Streptococcus lactis) protein is Membrane protein insertase YidC 1.